A 457-amino-acid chain; its full sequence is Putative ankyrin repeat protein L112 (457 aa).

ANK repeat units lie at residues 62–91, 104–132, 133–162, 193–219, 220–249, 251–279, 281–309, 310–339, 341–368, 400–429, and 431–457; these read QRIT…NHNP, SKDT…ASIN, SSSL…EIIN, YINE…LDCS, ITVD…DPRK, KCWA…KPKE, NVDA…DTIT, RRDW…SQKS, NKAL…DFRQ, NNNE…DYNP, and KDQL…DTLK.

The polypeptide is Putative ankyrin repeat protein L112 (Acanthamoeba polyphaga mimivirus (APMV)).